Consider the following 290-residue polypeptide: Acetyl-coenzyme A carboxylase carboxyl transferase subunit beta (290 aa).

The region spanning 27–290 (LWIKCPSCEA…LTRQPADAVA (264 aa)) is the CoA carboxyltransferase N-terminal domain. Zn(2+) is bound by residues Cys-31, Cys-34, Cys-50, and Cys-53. Residues 31–53 (CPSCEAVLYRNDVEANLHVCPKC) form a C4-type zinc finger.

The protein belongs to the AccD/PCCB family. As to quaternary structure, acetyl-CoA carboxylase is a heterohexamer composed of biotin carboxyl carrier protein (AccB), biotin carboxylase (AccC) and two subunits each of ACCase subunit alpha (AccA) and ACCase subunit beta (AccD). Zn(2+) is required as a cofactor.

It is found in the cytoplasm. It catalyses the reaction N(6)-carboxybiotinyl-L-lysyl-[protein] + acetyl-CoA = N(6)-biotinyl-L-lysyl-[protein] + malonyl-CoA. The protein operates within lipid metabolism; malonyl-CoA biosynthesis; malonyl-CoA from acetyl-CoA: step 1/1. In terms of biological role, component of the acetyl coenzyme A carboxylase (ACC) complex. Biotin carboxylase (BC) catalyzes the carboxylation of biotin on its carrier protein (BCCP) and then the CO(2) group is transferred by the transcarboxylase to acetyl-CoA to form malonyl-CoA. The chain is Acetyl-coenzyme A carboxylase carboxyl transferase subunit beta from Paraburkholderia phymatum (strain DSM 17167 / CIP 108236 / LMG 21445 / STM815) (Burkholderia phymatum).